We begin with the raw amino-acid sequence, 308 residues long: D-alanine--D-alanine ligase (308 aa).

The region spanning 106-305 (KMLWKAFGLP…FEQLVVKILE (200 aa)) is the ATP-grasp domain. 136 to 191 (VEKLGLPLMVKPSLEGSSVGLTKVNAIDDLKSAVEFALQYDETVLIEEWLSGDELT) lines the ATP pocket. Mg(2+) is bound by residues Asp-259, Glu-272, and Asn-274.

The protein belongs to the D-alanine--D-alanine ligase family. Mg(2+) is required as a cofactor. Requires Mn(2+) as cofactor.

It is found in the cytoplasm. It catalyses the reaction 2 D-alanine + ATP = D-alanyl-D-alanine + ADP + phosphate + H(+). Its pathway is cell wall biogenesis; peptidoglycan biosynthesis. Cell wall formation. The chain is D-alanine--D-alanine ligase from Histophilus somni (strain 2336) (Haemophilus somnus).